The sequence spans 559 residues: Asparagine--tRNA ligase, cytoplasmic (559 aa).

The residue at position 72 (Ser72) is a Phosphoserine. A disordered region spans residues 82-102 (HREQMKNDSREKKEAEDNLRR). Lys255 carries the N6-acetyllysine modification. Residue Ser493 is modified to Phosphoserine. Lys501 carries the post-translational modification N6-acetyllysine.

It belongs to the class-II aminoacyl-tRNA synthetase family. As to quaternary structure, homodimer.

It is found in the cytoplasm. The catalysed reaction is tRNA(Asn) + L-asparagine + ATP = L-asparaginyl-tRNA(Asn) + AMP + diphosphate + H(+). Catalyzes the attachment of asparagine to tRNA(Asn) in a two-step reaction: asparagine is first activated by ATP to form Asn-AMP and then transferred to the acceptor end of tRNA(Asn). In addition to its essential role in protein synthesis, acts as a signaling molecule that induced migration of CCR3-expressing cells. Has an essential role in the development of the cerebral cortex, being required for proper proliferation of radial glial cells. The protein is Asparagine--tRNA ligase, cytoplasmic of Mus musculus (Mouse).